We begin with the raw amino-acid sequence, 170 residues long: Histone H1.9 (170 aa).

Residues 34–108 (RKPTMSYVIL…GASGSLCLCK (75 aa)) form the H15 domain. The residue at position 56 (serine 56) is a Phosphoserine. The interval 118–140 (AKRCQDRQKSQKPQKPGQRESEP) is disordered.

The protein belongs to the histone H1/H5 family. Expressed exclusively in the testis by haploid germ cells (at protein level).

It is found in the nucleus. The protein localises to the chromosome. DNA-binding protein that may be implicated in chromatin remodeling and/or transcriptional regulation during spermiogenesis, the process of spermatid maturation into spermatozoa. This Mus musculus (Mouse) protein is Histone H1.9.